Consider the following 439-residue polypeptide: Chitinase-like protein Idgf1 (439 aa).

Residues 1–20 form the signal peptide; sequence MRFQLFYILGLLSVTSLTQA. Residues 22 to 439 form the GH18 domain; that stretch reads NNLVCYYDST…IVRSIKYFMG (418 aa). An intrachain disulfide couples C26 to C53. N122, N218, and N346 each carry an N-linked (GlcNAc...) asparagine glycan. C340 and C423 form a disulfide bridge.

Belongs to the glycosyl hydrolase 18 family. IDGF subfamily. Post-translationally, glycosylated.

The protein localises to the secreted. Its function is as follows. Cooperates with insulin-like peptides to stimulate the proliferation, polarization and motility of imaginal disk cells. May act by stabilizing the binding of insulin-like peptides to its receptor through a simultaneous interaction with both molecules to form a multiprotein signaling complex. This is Chitinase-like protein Idgf1 (Idgf1) from Drosophila simulans (Fruit fly).